The primary structure comprises 144 residues: Urease subunit beta (144 aa).

Belongs to the urease beta subunit family. In terms of assembly, heterotrimer of UreA (gamma), UreB (beta) and UreC (alpha) subunits. Three heterotrimers associate to form the active enzyme.

It localises to the cytoplasm. The enzyme catalyses urea + 2 H2O + H(+) = hydrogencarbonate + 2 NH4(+). Its pathway is nitrogen metabolism; urea degradation; CO(2) and NH(3) from urea (urease route): step 1/1. In Yersinia pseudotuberculosis serotype O:1b (strain IP 31758), this protein is Urease subunit beta.